Reading from the N-terminus, the 582-residue chain is Proline--tRNA ligase (582 aa).

Belongs to the class-II aminoacyl-tRNA synthetase family. ProS type 1 subfamily. Homodimer.

The protein localises to the cytoplasm. It catalyses the reaction tRNA(Pro) + L-proline + ATP = L-prolyl-tRNA(Pro) + AMP + diphosphate. Its function is as follows. Catalyzes the attachment of proline to tRNA(Pro) in a two-step reaction: proline is first activated by ATP to form Pro-AMP and then transferred to the acceptor end of tRNA(Pro). As ProRS can inadvertently accommodate and process non-cognate amino acids such as alanine and cysteine, to avoid such errors it has two additional distinct editing activities against alanine. One activity is designated as 'pretransfer' editing and involves the tRNA(Pro)-independent hydrolysis of activated Ala-AMP. The other activity is designated 'posttransfer' editing and involves deacylation of mischarged Ala-tRNA(Pro). The misacylated Cys-tRNA(Pro) is not edited by ProRS. This is Proline--tRNA ligase from Mycobacterium avium (strain 104).